We begin with the raw amino-acid sequence, 506 residues long: uncharacterized protein (506 aa).

Disordered stretches follow at residues 104–144 and 397–456; these read PNSS…ATSS and QQQK…DQLP. Residues 130–144 show a composition bias toward low complexity; the sequence is ESSPTLSSSSLATSS. The span at 405-443 shows a compositional bias: basic and acidic residues; that stretch reads IKDEDKNEKENKSENEEKEKEKEKEKEKEKEKEKEKEKE. A coiled-coil region spans residues 405-455; the sequence is IKDEDKNEKENKSENEEKEKEKEKEKEKEKEKEKEKEKENEEGEEDNGDQL.

This is an uncharacterized protein from Dictyostelium discoideum (Social amoeba).